The sequence spans 509 residues: Cytochrome P450 4A10 (509 aa).

The next 2 helical transmembrane spans lie at 15–35 (LSGF…VKAV) and 121–141 (LLAP…WFQH). A heme-binding site is contributed by E320. S439 is modified (phosphoserine). A heme-binding site is contributed by C456.

This sequence belongs to the cytochrome P450 family. Heme is required as a cofactor. As to expression, highly expressed in the kidneys of both genders.

The protein localises to the endoplasmic reticulum membrane. The protein resides in the microsome membrane. The enzyme catalyses an omega-methyl-long-chain fatty acid + reduced [NADPH--hemoprotein reductase] + O2 = an omega-hydroxy-long-chain fatty acid + oxidized [NADPH--hemoprotein reductase] + H2O + H(+). It catalyses the reaction dodecanoate + reduced [NADPH--hemoprotein reductase] + O2 = 12-hydroxydodecanoate + oxidized [NADPH--hemoprotein reductase] + H2O + H(+). It carries out the reaction dodecanoate + reduced [NADPH--hemoprotein reductase] + O2 = 11-hydroxydodecanoate + oxidized [NADPH--hemoprotein reductase] + H2O + H(+). The catalysed reaction is tetradecanoate + reduced [NADPH--hemoprotein reductase] + O2 = 14-hydroxytetradecanoate + oxidized [NADPH--hemoprotein reductase] + H2O + H(+). The enzyme catalyses hexadecanoate + reduced [NADPH--hemoprotein reductase] + O2 = 16-hydroxyhexadecanoate + oxidized [NADPH--hemoprotein reductase] + H2O + H(+). It catalyses the reaction (9Z)-octadecenoate + reduced [NADPH--hemoprotein reductase] + O2 = 18-hydroxy-(9Z)-octadecenoate + oxidized [NADPH--hemoprotein reductase] + H2O + H(+). It carries out the reaction (9Z,12Z)-octadecadienoate + reduced [NADPH--hemoprotein reductase] + O2 = 18-hydroxy-(9Z,12Z)-octadecadienoate + oxidized [NADPH--hemoprotein reductase] + H2O + H(+). The catalysed reaction is (9Z,12Z)-octadecadienoate + reduced [NADPH--hemoprotein reductase] + O2 = 17-hydroxy-(9Z,12Z)-octadecadienoate + oxidized [NADPH--hemoprotein reductase] + H2O + H(+). The enzyme catalyses (5Z,8Z,11Z,14Z)-eicosatetraenoate + reduced [NADPH--hemoprotein reductase] + O2 = 20-hydroxy-(5Z,8Z,11Z,14Z)-eicosatetraenoate + oxidized [NADPH--hemoprotein reductase] + H2O + H(+). It catalyses the reaction 8,9-epoxy-(5Z,11Z,14Z)-eicosatrienoate + reduced [NADPH--hemoprotein reductase] + O2 = 20-hydroxy-8,9-epoxy-(5Z,11Z,14Z)-eicosatrienoate + oxidized [NADPH--hemoprotein reductase] + H2O + H(+). Its function is as follows. A cytochrome P450 monooxygenase involved in the metabolism of fatty acids. Catalyzes predominantly the oxidation of the terminal carbon (omega-oxidation) of long-chain fatty acids. Acts as a major omega-hydroxylase for dodecanoic (lauric) acid in liver. In kidney, may play an important role in omega-hydroxylation of (5Z,8Z,11Z,14Z)-eicosatetraenoic acid (arachidonate) to 20-hydroxyeicosatetraenoic acid (20-HETE), a signaling molecule acting both as vasoconstrictive and natriuretic with overall effect on arterial blood pressure. Also participates in the formation of anti-inflammatory hydroxyepoxyeicosatrienoic acids (HEETs) in kidney by converting 8,9-epoxyeicosatrienoic acid (EET) to 20,8,9-HEET, an activator of PPARA. Displays substantially lower fatty acid omega-1 hydroxylase activity. Mechanistically, uses molecular oxygen inserting one oxygen atom into a substrate, and reducing the second into a water molecule, with two electrons provided by NADPH via cytochrome P450 reductase (CPR; NADPH-ferrihemoprotein reductase). The protein is Cytochrome P450 4A10 of Mus musculus (Mouse).